The primary structure comprises 201 residues: Small ribosomal subunit protein uS4 (201 aa).

Positions 91–157 (CRLDNVVYRA…TPFIIAKETI (67 aa)) constitute an S4 RNA-binding domain.

The protein belongs to the universal ribosomal protein uS4 family. As to quaternary structure, part of the 30S ribosomal subunit. Contacts protein S5. The interaction surface between S4 and S5 is involved in control of translational fidelity.

Functionally, one of the primary rRNA binding proteins, it binds directly to 16S rRNA where it nucleates assembly of the body of the 30S subunit. With S5 and S12 plays an important role in translational accuracy. The protein is Small ribosomal subunit protein uS4 of Saccharopolyspora erythraea (strain ATCC 11635 / DSM 40517 / JCM 4748 / NBRC 13426 / NCIMB 8594 / NRRL 2338).